The sequence spans 64 residues: Small ribosomal subunit protein bS21 (64 aa).

Belongs to the bacterial ribosomal protein bS21 family.

The chain is Small ribosomal subunit protein bS21 from Sulfurihydrogenibium sp. (strain YO3AOP1).